We begin with the raw amino-acid sequence, 397 residues long: MELVGWLVDKGITSEKQWIQEDQASYISFNAASNSRSQIKAALDNAGKIMSLTKTAPDYLVGQQPVEDISSNRIYKILELNGYDPQYAASVFLGWATKKFGKRNTIWLFGPATTGKTNIAEAIAHTVPFYGCVNWTNENFPFNDCVDKMVIWWEEGKMTAKVVESAKAILGGSKVRVDQKCKSSAQIDPTPVIVTSNTNMCAVIDGNSTTFEHQQPLQDRMFKFELTRRLDHDFGKVTKQEVKDFFRWAKDHVVEVEHEFYVKKGGAKKRPAPSDADISEPKRVRESVAQPSTSDAEASINYADRYQNKCSRHVGMNLMLFPCRQCERMNQNSNICFTHGQKDCLECFPVSESQPVSVVKKAYQKLCYIHHIMGKVPDACTACDLVNVDLDDCIFEQ.

The SF3 helicase domain maps to 84–239 (DPQYAASVFL…LDHDFGKVTK (156 aa)). Residue 110–117 (GPATTGKT) coordinates ATP. The tract at residues 265–296 (GGAKKRPAPSDADISEPKRVRESVAQPSTSDA) is disordered.

As to quaternary structure, homooligomer. Interacts with host PRKX.

The protein resides in the host nucleus. Its function is as follows. Plays a critical role during packaging of viral DNA into empty capsids, where they are thought to be part of the packaging motor complex. The single stranded genomic DNA is packaged in a 3' to 5' direction and requires the association between viral DNA and Rep40. Regulates host PKA activity by interacting with host PRKX as a mechanism to interfere with helper virus propagation and to promote its own replication. This chain is Protein Rep52 (Rep52), found in Mammalia (AAV-2).